The following is a 396-amino-acid chain: 8-amino-7-oxononanoate synthase (396 aa).

Arg-19 provides a ligand contact to substrate. 106–107 (GY) lines the pyridoxal 5'-phosphate pocket. His-131 contributes to the substrate binding site. Residues Ser-176, His-204, and Thr-233 each contribute to the pyridoxal 5'-phosphate site. N6-(pyridoxal phosphate)lysine is present on Lys-236. Thr-350 serves as a coordination point for substrate.

This sequence belongs to the class-II pyridoxal-phosphate-dependent aminotransferase family. BioF subfamily. In terms of assembly, homodimer. The cofactor is pyridoxal 5'-phosphate.

It carries out the reaction 6-carboxyhexanoyl-[ACP] + L-alanine + H(+) = (8S)-8-amino-7-oxononanoate + holo-[ACP] + CO2. The protein operates within cofactor biosynthesis; biotin biosynthesis. Catalyzes the decarboxylative condensation of pimeloyl-[acyl-carrier protein] and L-alanine to produce 8-amino-7-oxononanoate (AON), [acyl-carrier protein], and carbon dioxide. The polypeptide is 8-amino-7-oxononanoate synthase (Pseudomonas syringae pv. tomato (strain ATCC BAA-871 / DC3000)).